Reading from the N-terminus, the 141-residue chain is Lutropin subunit beta (141 aa).

Positions Met1 to Ala20 are cleaved as a signal peptide. Cystine bridges form between Cys29–Cys77, Cys43–Cys92, Cys46–Cys130, Cys54–Cys108, Cys58–Cys110, and Cys113–Cys120. The N-linked (GlcNAc...) asparagine glycan is linked to Asn33.

Belongs to the glycoprotein hormones subunit beta family. Heterodimer of a common alpha chain and a unique beta chain which confers biological specificity to thyrotropin, lutropin, follitropin and gonadotropin.

Its subcellular location is the secreted. Its function is as follows. Promotes spermatogenesis and ovulation by stimulating the testes and ovaries to synthesize steroids. This Ailuropoda melanoleuca (Giant panda) protein is Lutropin subunit beta (LHB).